A 205-amino-acid chain; its full sequence is Small ribosomal subunit protein uS4 (205 aa).

Positions 19–45 are disordered; the sequence is IWGRPKSPVNRREYGPGQHGQRRKGKL. The 64-residue stretch at 94-157 folds into the S4 RNA-binding domain; sequence SRLDAVVYRA…KQLVIVLEAV (64 aa).

Belongs to the universal ribosomal protein uS4 family. As to quaternary structure, part of the 30S ribosomal subunit. Contacts protein S5. The interaction surface between S4 and S5 is involved in control of translational fidelity.

Functionally, one of the primary rRNA binding proteins, it binds directly to 16S rRNA where it nucleates assembly of the body of the 30S subunit. In terms of biological role, with S5 and S12 plays an important role in translational accuracy. This Brucella anthropi (strain ATCC 49188 / DSM 6882 / CCUG 24695 / JCM 21032 / LMG 3331 / NBRC 15819 / NCTC 12168 / Alc 37) (Ochrobactrum anthropi) protein is Small ribosomal subunit protein uS4.